The following is a 62-amino-acid chain: MARKKFSGLEIXLIVLFAIVLSIAIALVVVXASKXPAVIKLPSDPIPTLRMEMTYHTDYMLE.

Over 2–12 (ARKKFSGLEIX) the chain is Cytoplasmic. A Phosphoserine; by PKA modification is found at Ser-7. A helical; Signal-anchor for type II membrane protein transmembrane segment spans residues 13–32 (LIVLFAIVLSIAIALVVVXA). Topologically, residues 33–38 (SKXPAV) are lumenal. A Sulfotyrosine modification is found at Tyr-59.

It belongs to the glycosyl hydrolase 31 family. The resulting sucrase and isomaltase subunits stay associated with one another in a complex by non-covalent linkages. The precursor is proteolytically cleaved when exposed to pancreatic proteases in the intestinal lumen. In terms of processing, sulfated.

It localises to the apical cell membrane. It catalyses the reaction Hydrolysis of sucrose and maltose by an alpha-D-glucosidase-type action.. It carries out the reaction Hydrolysis of (1-&gt;6)-alpha-D-glucosidic linkages in some oligosaccharides produced from starch and glycogen by alpha-amylase, and in isomaltose.. In terms of biological role, plays an important role in the final stage of carbohydrate digestion. Isomaltase activity is specific for both alpha-1,4- and alpha-1,6-oligosaccharides. This chain is Sucrase-isomaltase, intestinal (SI), found in Sus scrofa (Pig).